The sequence spans 529 residues: Cytochrome P450 monooxygenase atmQ (529 aa).

2 helical membrane passes run 22-42 (YPFA…QQLA) and 51-71 (SWVN…IAAF). Residue Cys-467 participates in heme binding.

The protein belongs to the cytochrome P450 family. Requires heme as cofactor.

Its subcellular location is the membrane. The protein operates within secondary metabolite biosynthesis. Its function is as follows. Cytochrome P450 monooxygenase; part of the ATM2 gene cluster that mediates the biosynthesis of aflatrem, a tremorgenic mycotoxin with acute neurotoxic effects. Synthesis of geranylgeranyl diphosphate (GGPP) by AtmG (a GGPP synthase) precedes condensation of GGPP with indole 3-glycerol phosphate, followed by epoxidation and cyclization by AtmM (a FAD-dependent monooxygenase) and AtmC (a prenyltransferase) to produce paspaline. AtmB is also essential for paspaline production, but its exact role has not been identified yet. AtmP, a cytochrome P450 monooxygenase, subsequently converts paspaline to 13-desoxypaxilline via PC-M6 by removal of the C-30 methyl group and oxidation at C-10. AtmQ, a cytochrome P450 monooxygenase, then catalyzes the oxidation of 13-desoxypaxilline, first at C-7 to produce paspalicine and then at C-13 to form paspalinine. Finally, AtmD prenylates paspalinine to form aflatrem. This is Cytochrome P450 monooxygenase atmQ from Aspergillus flavus.